The following is a 1401-amino-acid chain: Uveal autoantigen with coiled-coil domains and ankyrin repeats protein (1401 aa).

ANK repeat units lie at residues 25 to 53 (LMRAAERGDVEKVSSILAKKGVNPGKLDV), 54 to 83 (EGRSAFHVVASKGNLECLNAILIHGVDITT), 87 to 116 (AGRNALHLAAKYGHALCLQKLLQYNCPTEH), 120 to 149 (QGRTALHDAAMADCPSSIQLLCDHGASVNA), 153 to 182 (DGRTPLVLATQMCRPTICQLLIDRGADINS), and 186 to 215 (QNRTALMLGCEYGCKDAVEVLIKNGADVTL). Ser-265 is modified (phosphoserine). Coiled coils occupy residues 273 to 361 (TKSN…SRFK), 423 to 827 (ENEI…EKIY), and 856 to 1368 (ALSS…VIAI). Lys-1020 participates in a covalent cross-link: Glycyl lysine isopeptide (Lys-Gly) (interchain with G-Cter in SUMO2).

In terms of assembly, component of the apoptosome complex, composed of APAF1, pro-caspase-9 and UACA. In the complex, it probably interacts directly with APAF1. Interacts with LGALS3. Interacts with ARF6 and ACTB. Interacts with RAB39A. Highly expressed in muscle and heart, moderately in liver, kidney and pancreas, and weakly in placenta and lung.

It is found in the nucleus. The protein resides in the cytoplasm. Its subcellular location is the cytoskeleton. Regulates APAF1 expression and plays an important role in the regulation of stress-induced apoptosis. Promotes apoptosis by regulating three pathways, apoptosome up-regulation, LGALS3/galectin-3 down-regulation and NF-kappa-B inactivation. Regulates the redistribution of APAF1 into the nucleus after proapoptotic stress. Down-regulates the expression of LGALS3 by inhibiting NFKB1. Its function is as follows. Modulates isoactin dynamics to regulate the morphological alterations required for cell growth and motility. Interaction with ARF6 may modulate cell shape and motility after injury. May be involved in multiple neurite formation. The protein is Uveal autoantigen with coiled-coil domains and ankyrin repeats protein (UACA) of Bos taurus (Bovine).